A 260-amino-acid polypeptide reads, in one-letter code: Protein TONNEAU 1a (260 aa).

In terms of domain architecture, LisH spans 73 to 105 (SGRLLSALICEYLDWAQLNHTLIVYQPESNLPK). 2 disordered regions span residues 147-224 (TQGM…EEVT) and 236-260 (DRKT…EGRD). Over residues 161-175 (ESSSSLESRNPPRRS) the composition is skewed to low complexity. Basic and acidic residues predominate over residues 248–260 (NVRDGTNEEEGRD).

As to quaternary structure, interacts with CEN1, LNG1/TRM2 and LNG2/TRM1 (via C-terminus).

It is found in the cytoplasm. It localises to the cytoskeleton. Its function is as follows. Involved in the control of the dynamic organization of the cortical cytoskeleton. May play a role in the organization of microtubule arrays at the centrosome through interaction with centrin 1 (CEN1). This is Protein TONNEAU 1a (TON1A) from Arabidopsis thaliana (Mouse-ear cress).